The sequence spans 157 residues: Ribosome maturation factor RimP (157 aa).

This sequence belongs to the RimP family.

It is found in the cytoplasm. In terms of biological role, required for maturation of 30S ribosomal subunits. This chain is Ribosome maturation factor RimP, found in Bacillus pumilus (strain SAFR-032).